The chain runs to 443 residues: MSEMTPREIVHELNRHIIGQDNAKRSVAIALRNRWRRMQLEESLRVEVTPKNILMIGPTGVGKTEIARRLAKLANAPFIKVEATKFTEVGYVGKEVESIIRDLTDVAVKLTHQQAMEKVKFRAEELAEERILDALLPPPRDAWGQNEQSEDTSNTRQIFRKKLREGKLDDKEIEINVAAPQMGVEIMAPPGMEEMTNQLQGMFQSLAGNTSKKRKLKIKDAFKALIEEEAAKLVNQDELKEQAIYSVENNGIVFIDEIDKICKRGESSGPDVSREGVQRDLLPLIEGSTVSTKHGMVKTDHILFIASGAFQVAKPSDLIPELQGRLPIRVELEALSSHDFKRILTEPRASLTEQYVALMKTEDVDIEFTEDGITQIAEAAWTVNETTENIGARRLHTVMERLMDEISFDATEKSGTKFVIDAAYVQQRLGEFVEDEDLSRFIL.

ATP is bound by residues I18 and 60–65 (GVGKTE). The interval 137–156 (PPPRDAWGQNEQSEDTSNTR) is disordered. Positions 145 to 156 (QNEQSEDTSNTR) are enriched in polar residues. ATP-binding residues include D256, E321, and R393.

Belongs to the ClpX chaperone family. HslU subfamily. As to quaternary structure, a double ring-shaped homohexamer of HslV is capped on each side by a ring-shaped HslU homohexamer. The assembly of the HslU/HslV complex is dependent on binding of ATP.

Its subcellular location is the cytoplasm. Functionally, ATPase subunit of a proteasome-like degradation complex; this subunit has chaperone activity. The binding of ATP and its subsequent hydrolysis by HslU are essential for unfolding of protein substrates subsequently hydrolyzed by HslV. HslU recognizes the N-terminal part of its protein substrates and unfolds these before they are guided to HslV for hydrolysis. This Vibrio vulnificus (strain YJ016) protein is ATP-dependent protease ATPase subunit HslU.